Consider the following 514-residue polypeptide: Maltose/maltodextrin transport system permease protein MalF (514 aa).

Residues 1 to 12 (MDAVKKKHWWQS) are Cytoplasmic-facing. The chain crosses the membrane as a helical span at residues 13 to 35 (PQLTWSVIGLLCLLVGYLVVLMY). At 36–39 (AQGE) the chain is on the periplasmic side. A helical membrane pass occupies residues 40–57 (YLFAIMTLILSSVGLYIF). Residues 58 to 69 (SNRKAYAWRYVY) are Cytoplasmic-facing. A helical transmembrane segment spans residues 70 to 92 (PGLAGMGLFVLFPLICTIAIAFT). Over 93–283 (NYSSTNQLTF…QKPFFAIFVW (191 aa)) the chain is Periplasmic. The ABC transmembrane type-1 domain maps to 281 to 505 (FVWTVVFSVL…LLVGALAIVN (225 aa)). The helical transmembrane segment at 284 to 306 (TVVFSVLTVILTVAVGMVLACLV) threads the bilayer. Over 307-318 (QWEALKGKAIYR) the chain is Cytoplasmic. The chain crosses the membrane as a helical span at residues 319–341 (VLLILPYAVPSFISILIFKGLFN). Over 342–369 (QSFGEINMMLSALFGIKPAWFSDPTTAR) the chain is Periplasmic. Residues 370 to 392 (TMIIIVNTWLGYPYMMILCMGLL) form a helical membrane-spanning segment. Over 393 to 412 (KAIPDDLYEASAMDGAGPFQ) the chain is Cytoplasmic. A helical transmembrane segment spans residues 413 to 435 (NFFKITLPLLIKPLTPLMIASFA). At 436–483 (FNFNNFVLIQLLTNGGPDRLGTTTPAGYTDLLVSYTYRIAFEGGGGQD) the chain is on the periplasmic side. A helical membrane pass occupies residues 484-506 (FGLAAAIATLIFLLVGALAIVNL). Topologically, residues 507 to 514 (KATRMKFD) are cytoplasmic.

The protein belongs to the binding-protein-dependent transport system permease family. MalFG subfamily. In terms of assembly, the complex is composed of two ATP-binding proteins (MalK), two transmembrane proteins (MalG and MalF) and a solute-binding protein (MalE).

It localises to the cell inner membrane. Functionally, part of the ABC transporter complex MalEFGK involved in maltose/maltodextrin import. Probably responsible for the translocation of the substrate across the membrane. The sequence is that of Maltose/maltodextrin transport system permease protein MalF (malF) from Klebsiella aerogenes (Enterobacter aerogenes).